The following is an 803-amino-acid chain: Ras GTPase-activating protein 4 (803 aa).

2 C2 domains span residues 1 to 105 (MAKR…SGWA) and 116 to 232 (VQGE…EGWF). 12 residues coordinate Ca(2+): aspartate 21, aspartate 27, aspartate 74, aspartate 76, serine 79, aspartate 82, aspartate 149, aspartate 155, aspartate 202, aspartate 204, serine 207, and aspartate 210. The 229-residue stretch at 318-546 (GLAKDFLDLL…AQLKDFITKL (229 aa)) folds into the Ras-GAP domain. The region spanning 566 to 673 (PPVKEGPLFI…WLSALRKVSI (108 aa)) is the PH domain. A Btk-type zinc finger spans residues 675–711 (NTGLLGSYHPGVFRGDKWSCCHQKEKTGQGCDKTRSR). Histidine 683, cysteine 694, cysteine 695, and cysteine 705 together coordinate Zn(2+). The interval 781 to 803 (EAHSSSPAGSPPSEPNCLLELQT) is disordered.

Requires Ca(2+) as cofactor. In terms of tissue distribution, widely expressed.

Its subcellular location is the cytoplasm. The protein resides in the cytosol. It localises to the cell membrane. Functionally, ca(2+)-dependent Ras GTPase-activating protein, that switches off the Ras-MAPK pathway following a stimulus that elevates intracellular calcium. Functions as an adaptor for Cdc42 and Rac1 during FcR-mediated phagocytosis. This Homo sapiens (Human) protein is Ras GTPase-activating protein 4 (RASA4).